The sequence spans 338 residues: Nicotinate-nucleotide--dimethylbenzimidazole phosphoribosyltransferase (338 aa).

Glutamate 305 acts as the Proton acceptor in catalysis.

It belongs to the CobT family.

It carries out the reaction 5,6-dimethylbenzimidazole + nicotinate beta-D-ribonucleotide = alpha-ribazole 5'-phosphate + nicotinate + H(+). The protein operates within nucleoside biosynthesis; alpha-ribazole biosynthesis; alpha-ribazole from 5,6-dimethylbenzimidazole: step 1/2. In terms of biological role, catalyzes the synthesis of alpha-ribazole-5'-phosphate from nicotinate mononucleotide (NAMN) and 5,6-dimethylbenzimidazole (DMB). In Rhizobium johnstonii (strain DSM 114642 / LMG 32736 / 3841) (Rhizobium leguminosarum bv. viciae), this protein is Nicotinate-nucleotide--dimethylbenzimidazole phosphoribosyltransferase.